The following is a 377-amino-acid chain: Histone deacetylase 8 (377 aa).

Residues 14-324 (LVPVYIYSPE…WTYLTGVILG (311 aa)) form a histone deacetylase region. S39 carries the phosphoserine modification. Residue D101 coordinates substrate. H143 serves as the catalytic Proton acceptor. G151 contacts substrate. Residues D178, H180, and D267 each contribute to the a divalent metal cation site. Residue Y306 participates in substrate binding.

It belongs to the histone deacetylase family. HD type 1 subfamily. Interacts with PEPB2-MYH11, a fusion protein consisting of the 165 N-terminal residues of CBF-beta (PEPB2) with the tail region of MYH11 produced by the inversion Inv(16)(p13q22), a translocation associated with acute myeloid leukemia of M4EO subtype. The PEPB2-MYH1 fusion protein also interacts with RUNX1, a well known transcriptional regulator, suggesting that the interaction with HDAC8 may participate in the conversion of RUNX1 into a constitutive transcriptional repressor. Interacts with CBFA2T3. Interacts with phosphorylated SMG5/EST1B; this interaction protects SMG5 from ubiquitin-mediated degradation. Associates with alpha-SMA (smooth muscle alpha-actin). Requires a divalent metal cation as cofactor. Post-translationally, phosphorylated by PKA on serine 39. Phosphorylation reduces deacetylase activity observed preferentially on histones H3 and H4. Weakly expressed in most tissues. Expressed at higher level in heart, brain, kidney and pancreas and also in liver, lung, placenta, prostate and kidney.

The protein resides in the nucleus. Its subcellular location is the chromosome. The protein localises to the cytoplasm. It catalyses the reaction N(6)-acetyl-L-lysyl-[histone] + H2O = L-lysyl-[histone] + acetate. The enzyme catalyses N(6)-acetyl-L-lysyl-[protein] + H2O = L-lysyl-[protein] + acetate. The catalysed reaction is N(6)-(2E)-butenoyl-L-lysyl-[protein] + H2O = (2E)-2-butenoate + L-lysyl-[protein]. Its activity is regulated as follows. Its activity is inhibited by trichostatin A (TSA), suberoylanilide hydroxamic acid (SAHA), 3-(1-methyl-4-phenylacetyl-1H-2-pyrrolyl)-N-hydroxy-2-propenamide (APHA), 4-dimethylamino-N-(6-hydroxycarbamoyethyl)benzamide-N-hydroxy-7-(4-dimethylaminobenzoyl)aminoheptanamide (MS-344), 5-(4-methyl-benzoylamino)-biphenyl-3,4'-dicarboxylic acid 3-dimethylamide 4'-hydroxyamide (CRA-A) and butyrate. Its function is as follows. Histone deacetylase that catalyzes the deacetylation of lysine residues on the N-terminal part of the core histones (H2A, H2B, H3 and H4). Histone deacetylation gives a tag for epigenetic repression and plays an important role in transcriptional regulation, cell cycle progression and developmental events. Histone deacetylases act via the formation of large multiprotein complexes. Also involved in the deacetylation of cohesin complex protein SMC3 regulating release of cohesin complexes from chromatin. May play a role in smooth muscle cell contractility. In addition to protein deacetylase activity, also has protein-lysine deacylase activity: acts as a protein decrotonylase by mediating decrotonylation ((2E)-butenoyl) of histones. This Homo sapiens (Human) protein is Histone deacetylase 8.